A 127-amino-acid chain; its full sequence is Major sperm protein 19/31/40/45/50/51/53/59/61/65/81/113/142 (127 aa).

Ala-2 carries the N-acetylalanine modification. Positions 9–126 (DIQTQPGTKI…RRKNLPIEYN (118 aa)) constitute an MSP domain.

Helical subfilaments are built from MSP dimers; filaments are formed from two subfilaments coiling round one another; and filaments themselves supercoil to produce bundles. In terms of tissue distribution, sperm.

It is found in the cell projection. The protein resides in the pseudopodium. The protein localises to the cytoplasm. It localises to the cytoskeleton. Central component in molecular interactions underlying sperm crawling. Forms an extensive filament system that extends from sperm villipoda, along the leading edge of the pseudopod. This chain is Major sperm protein 19/31/40/45/50/51/53/59/61/65/81/113/142 (msp-19), found in Caenorhabditis elegans.